The chain runs to 261 residues: 3-hydroxyacyl-CoA dehydrogenase type-2 (261 aa).

Residue Ala-2 is modified to N-acetylalanine. Residues Ser-20, Leu-22, and Asp-41 each contribute to the NAD(+) site. Lys-53 is subject to N6-acetyllysine; alternate. Lys-53 is subject to N6-succinyllysine; alternate. 2 residues coordinate NAD(+): Asp-64 and Val-65. Lys-69 is modified (N6-acetyllysine). Cys-91 contributes to the NAD(+) binding site. An N6-acetyllysine mark is found at Lys-99 and Lys-105. Ser-155 contacts substrate. NAD(+)-binding residues include Tyr-168, Lys-172, Phe-201, and Thr-203. Tyr-168 acts as the Proton acceptor in catalysis. Lys-212 is modified (N6-acetyllysine; alternate). Lys-212 is subject to N6-succinyllysine; alternate.

Belongs to the short-chain dehydrogenases/reductases (SDR) family. Homotetramer. Component of mitochondrial ribonuclease P, a complex composed of TRMT10C/MRPP1, HSD17B10/MRPP2 and PRORP/MRPP3. Interacts with TRMT10C/MRPP1; forming the MRPP1-MRPP2 subcomplex of the mitochondrial ribonuclease P complex.

It is found in the mitochondrion. Its subcellular location is the mitochondrion matrix. The protein resides in the mitochondrion nucleoid. It catalyses the reaction a (3S)-3-hydroxyacyl-CoA + NAD(+) = a 3-oxoacyl-CoA + NADH + H(+). The catalysed reaction is (2S,3S)-3-hydroxy-2-methylbutanoyl-CoA + NAD(+) = 2-methyl-3-oxobutanoyl-CoA + NADH + H(+). It carries out the reaction testosterone + NAD(+) = androst-4-ene-3,17-dione + NADH + H(+). The enzyme catalyses 5alpha-androstane-3alpha,17beta-diol + NAD(+) = 17beta-hydroxy-5alpha-androstan-3-one + NADH + H(+). It catalyses the reaction 17beta-estradiol + NAD(+) = estrone + NADH + H(+). The catalysed reaction is cholate + NAD(+) = 3alpha,12alpha-dihydroxy-7-oxo-5beta-cholanate + NADH + H(+). It carries out the reaction (3S)-3-hydroxybutanoyl-CoA + NAD(+) = acetoacetyl-CoA + NADH + H(+). The enzyme catalyses (3S)-hydroxyoctanoyl-CoA + NAD(+) = 3-oxooctanoyl-CoA + NADH + H(+). It catalyses the reaction (3S)-hydroxyhexadecanoyl-CoA + NAD(+) = 3-oxohexadecanoyl-CoA + NADH + H(+). The catalysed reaction is 17beta-hydroxy-5alpha-androstan-3-one + NAD(+) = 5alpha-androstan-3,17-dione + NADH + H(+). It carries out the reaction 5alpha-pregnan-20beta-ol-3-one + NAD(+) = 5alpha-pregnane-3,20-dione + NADH + H(+). The enzyme catalyses 3alpha-hydroxy-5alpha-pregnan-20-one + NAD(+) = 5alpha-pregnane-3,20-dione + NADH + H(+). It catalyses the reaction cortisone + NAD(+) = 17alpha-hydroxypregn-4-en-3,11,20-trione-21-al + NADH + H(+). The catalysed reaction is 11-dehydrocorticosterone + NAD(+) = pregn-4-ene-3,11,20,21-tetraone + NADH + H(+). It carries out the reaction cortisol + NAD(+) = 11beta,17alpha-dihydroxypregn-4-ene-3,20,21-trione + NADH + H(+). The enzyme catalyses chenodeoxycholate + NAD(+) = 7-oxolithocholate + NADH + H(+). It catalyses the reaction ursodeoxycholate + NAD(+) = 7-oxolithocholate + NADH + H(+). The catalysed reaction is 3beta,7beta-dihydroxy-5beta-cholan-24-oate + NAD(+) = 3beta-hydroxy-7-oxo-5beta-cholan-24-oate + NADH + H(+). The protein operates within amino-acid degradation; L-isoleucine degradation. Its pathway is lipid metabolism; fatty acid beta-oxidation. It participates in steroid metabolism. It functions in the pathway lipid metabolism; bile acid biosynthesis. Mitochondrial dehydrogenase involved in pathways of fatty acid, branched-chain amino acid and steroid metabolism. Acts as (S)-3-hydroxyacyl-CoA dehydrogenase in mitochondrial fatty acid beta-oxidation, a major degradation pathway of fatty acids. Catalyzes the third step in the beta-oxidation cycle, namely the reversible conversion of (S)-3-hydroxyacyl-CoA to 3-ketoacyl-CoA. Preferentially accepts straight medium- and short-chain acyl-CoA substrates with highest efficiency for (3S)-hydroxybutanoyl-CoA. Acts as 3-hydroxy-2-methylbutyryl-CoA dehydrogenase in branched-chain amino acid catabolic pathway. Catalyzes the oxidation of 3-hydroxy-2-methylbutanoyl-CoA into 2-methyl-3-oxobutanoyl-CoA, a step in isoleucine degradation pathway. Has hydroxysteroid dehydrogenase activity toward steroid hormones and bile acids. Catalyzes the oxidation of 3alpha-, 17beta-, 20beta- and 21-hydroxysteroids and 7alpha- and 7beta-hydroxy bile acids. Oxidizes allopregnanolone/brexanolone at the 3alpha-hydroxyl group, which is known to be critical for the activation of gamma-aminobutyric acid receptors (GABAARs) chloride channel. Has phospholipase C-like activity toward cardiolipin and its oxidized species. Likely oxidizes the 2'-hydroxyl in the head group of cardiolipin to form a ketone intermediate that undergoes nucleophilic attack by water and fragments into diacylglycerol, dihydroxyacetone and orthophosphate. Has higher affinity for cardiolipin with oxidized fatty acids and may degrade these species during the oxidative stress response to protect cells from apoptosis. By interacting with intracellular amyloid-beta, it may contribute to the neuronal dysfunction associated with Alzheimer disease (AD). Essential for structural and functional integrity of mitochondria. Its function is as follows. In addition to mitochondrial dehydrogenase activity, moonlights as a component of mitochondrial ribonuclease P, a complex that cleaves tRNA molecules in their 5'-ends. Together with TRMT10C/MRPP1, forms a subcomplex of the mitochondrial ribonuclease P, named MRPP1-MRPP2 subcomplex, which displays functions that are independent of the ribonuclease P activity. The MRPP1-MRPP2 subcomplex catalyzes the formation of N(1)-methylguanine and N(1)-methyladenine at position 9 (m1G9 and m1A9, respectively) in tRNAs; HSD17B10/MRPP2 acting as a non-catalytic subunit. The MRPP1-MRPP2 subcomplex also acts as a tRNA maturation platform: following 5'-end cleavage by the mitochondrial ribonuclease P complex, the MRPP1-MRPP2 subcomplex enhances the efficiency of 3'-processing catalyzed by ELAC2, retains the tRNA product after ELAC2 processing and presents the nascent tRNA to the mitochondrial CCA tRNA nucleotidyltransferase TRNT1 enzyme. Associates with mitochondrial DNA complexes at the nucleoids to initiate RNA processing and ribosome assembly. In Bos taurus (Bovine), this protein is 3-hydroxyacyl-CoA dehydrogenase type-2 (HSD17B10).